A 236-amino-acid chain; its full sequence is 2-C-methyl-D-erythritol 4-phosphate cytidylyltransferase (236 aa).

Belongs to the IspD/TarI cytidylyltransferase family. IspD subfamily. As to quaternary structure, homodimer.

It catalyses the reaction 2-C-methyl-D-erythritol 4-phosphate + CTP + H(+) = 4-CDP-2-C-methyl-D-erythritol + diphosphate. It participates in isoprenoid biosynthesis; isopentenyl diphosphate biosynthesis via DXP pathway; isopentenyl diphosphate from 1-deoxy-D-xylulose 5-phosphate: step 2/6. In terms of biological role, catalyzes the formation of 4-diphosphocytidyl-2-C-methyl-D-erythritol from CTP and 2-C-methyl-D-erythritol 4-phosphate (MEP). The sequence is that of 2-C-methyl-D-erythritol 4-phosphate cytidylyltransferase from Cronobacter sakazakii (strain ATCC BAA-894) (Enterobacter sakazakii).